The chain runs to 450 residues: Dol-P-Glc:Glc(2)Man(9)GlcNAc(2)-PP-Dol alpha-1,2-glucosyltransferase (450 aa).

Residues 12 to 32 (ISIISKYVAIVIFLIFVIIMF) traverse the membrane as a helical segment. An N-linked (GlcNAc...) asparagine glycan is attached at asparagine 34. 4 consecutive transmembrane segments (helical) span residues 158 to 178 (YFLF…LGLI), 190 to 210 (ALVG…IAFI), 243 to 263 (LLGY…NGGI), and 273 to 293 (IELH…FTIP). An N-linked (GlcNAc...) asparagine glycan is attached at asparagine 297. 4 consecutive transmembrane segments (helical) span residues 312–332 (IILN…FTIV), 357–377 (LKPL…SSLI), 384–404 (FIGI…SPLF), and 429–449 (FIWL…KGII).

Belongs to the ALG10 glucosyltransferase family.

It localises to the endoplasmic reticulum membrane. It carries out the reaction an alpha-D-Glc-(1-&gt;3)-alpha-D-Glc-(1-&gt;3)-alpha-D-Man-(1-&gt;2)-alpha-D-Man-(1-&gt;2)-alpha-D-Man-(1-&gt;3)-[alpha-D-Man-(1-&gt;2)-alpha-D-Man-(1-&gt;3)-[alpha-D-Man-(1-&gt;2)-alpha-D-Man-(1-&gt;6)]-alpha-D-Man-(1-&gt;6)]-beta-D-Man-(1-&gt;4)-beta-D-GlcNAc-(1-&gt;4)-alpha-D-GlcNAc-diphospho-di-trans,poly-cis-dolichol + a di-trans,poly-cis-dolichyl beta-D-glucosyl phosphate = a alpha-D-Glc-(1-&gt;2)-alpha-D-Glc-(1-&gt;3)-alpha-D-Glc-(1-&gt;3)-alpha-D-Man-(1-&gt;2)-alpha-D-Man-(1-&gt;2)-alpha-D-Man-(1-&gt;3)-[alpha-D-Man-(1-&gt;2)-alpha-D-Man-(1-&gt;3)-[alpha-D-Man-(1-&gt;2)-alpha-D-Man-(1-&gt;6)]-alpha-D-Man-(1-&gt;6)]-beta-D-Man-(1-&gt;4)-beta-D-GlcNAc-(1-&gt;4)-alpha-D-GlcNAc-diphospho-di-trans,poly-cis-dolichol + a di-trans,poly-cis-dolichyl phosphate + H(+). Its pathway is protein modification; protein glycosylation. In terms of biological role, dol-P-Glc:Glc(2)Man(9)GlcNAc(2)-PP-Dol alpha-1,2-glucosyltransferase that operates in the biosynthetic pathway of dolichol-linked oligosaccharides, the glycan precursors employed in protein asparagine (N)-glycosylation. The assembly of dolichol-linked oligosaccharides begins on the cytosolic side of the endoplasmic reticulum membrane and finishes in its lumen. The sequential addition of sugars to dolichol pyrophosphate produces dolichol-linked oligosaccharides containing fourteen sugars, including two GlcNAcs, nine mannoses and three glucoses. Once assembled, the oligosaccharide is transferred from the lipid to nascent proteins by oligosaccharyltransferases. In the lumen of the endoplasmic reticulum, adds the third and last glucose residue from dolichyl phosphate glucose (Dol-P-Glc) onto the lipid-linked oligosaccharide intermediate Glc(2)Man(9)GlcNAc(2)-PP-Dol to produce Glc(3)Man(9)GlcNAc(2)-PP-Dol. The polypeptide is Dol-P-Glc:Glc(2)Man(9)GlcNAc(2)-PP-Dol alpha-1,2-glucosyltransferase (DIE2) (Candida albicans (strain SC5314 / ATCC MYA-2876) (Yeast)).